Reading from the N-terminus, the 503-residue chain is uncharacterized protein (503 aa).

2 disordered regions span residues 1–26 and 132–156; these read MADD…SPTT and DQQQ…DNSM. The segment covering 16 to 26 has biased composition (low complexity); it reads AQSSVPTSPTT. A compositionally biased stretch (polar residues) spans 147–156; sequence TPNSVDDNSM.

This is an uncharacterized protein from Caenorhabditis elegans.